Here is a 195-residue protein sequence, read N- to C-terminus: Glycerol-3-phosphate acyltransferase (195 aa).

A run of 5 helical transmembrane segments spans residues 2-22 (LWIF…GLFI), 52-72 (YGVA…LMAY), 78-98 (WIFI…SIFM), 112-132 (VFLA…LAVI), and 145-165 (FAVA…VPLA).

Belongs to the PlsY family. In terms of assembly, probably interacts with PlsX.

It localises to the cell inner membrane. It catalyses the reaction an acyl phosphate + sn-glycerol 3-phosphate = a 1-acyl-sn-glycero-3-phosphate + phosphate. Its pathway is lipid metabolism; phospholipid metabolism. Its function is as follows. Catalyzes the transfer of an acyl group from acyl-phosphate (acyl-PO(4)) to glycerol-3-phosphate (G3P) to form lysophosphatidic acid (LPA). This enzyme utilizes acyl-phosphate as fatty acyl donor, but not acyl-CoA or acyl-ACP. This is Glycerol-3-phosphate acyltransferase from Maridesulfovibrio salexigens (strain ATCC 14822 / DSM 2638 / NCIMB 8403 / VKM B-1763) (Desulfovibrio salexigens).